Here is a 693-residue protein sequence, read N- to C-terminus: Phosphoribosylformylglycinamidine synthase subunit PurL (693 aa).

The active site involves histidine 34. ATP is bound by residues tyrosine 37 and lysine 76. Glutamate 78 is a Mg(2+) binding site. Substrate-binding positions include 79–82 (SHNH) and arginine 101. Histidine 80 functions as the Proton acceptor in the catalytic mechanism. Aspartate 102 contacts Mg(2+). Residue glutamine 222 participates in substrate binding. Aspartate 248 is a Mg(2+) binding site. 292–294 (ETQ) is a substrate binding site. ATP contacts are provided by aspartate 470 and glycine 507. Serine 510 contacts substrate.

Belongs to the FGAMS family. In terms of assembly, monomer. Part of the FGAM synthase complex composed of 1 PurL, 1 PurQ and 2 PurS subunits.

Its subcellular location is the cytoplasm. It catalyses the reaction N(2)-formyl-N(1)-(5-phospho-beta-D-ribosyl)glycinamide + L-glutamine + ATP + H2O = 2-formamido-N(1)-(5-O-phospho-beta-D-ribosyl)acetamidine + L-glutamate + ADP + phosphate + H(+). It functions in the pathway purine metabolism; IMP biosynthesis via de novo pathway; 5-amino-1-(5-phospho-D-ribosyl)imidazole from N(2)-formyl-N(1)-(5-phospho-D-ribosyl)glycinamide: step 1/2. Its function is as follows. Part of the phosphoribosylformylglycinamidine synthase complex involved in the purines biosynthetic pathway. Catalyzes the ATP-dependent conversion of formylglycinamide ribonucleotide (FGAR) and glutamine to yield formylglycinamidine ribonucleotide (FGAM) and glutamate. The FGAM synthase complex is composed of three subunits. PurQ produces an ammonia molecule by converting glutamine to glutamate. PurL transfers the ammonia molecule to FGAR to form FGAM in an ATP-dependent manner. PurS interacts with PurQ and PurL and is thought to assist in the transfer of the ammonia molecule from PurQ to PurL. The protein is Phosphoribosylformylglycinamidine synthase subunit PurL of Pyrobaculum calidifontis (strain DSM 21063 / JCM 11548 / VA1).